A 68-amino-acid chain; its full sequence is Large ribosomal subunit protein bL31 (68 aa).

Zn(2+)-binding residues include C16, C18, C37, and C40.

The protein belongs to the bacterial ribosomal protein bL31 family. Type A subfamily. Part of the 50S ribosomal subunit. Requires Zn(2+) as cofactor.

Binds the 23S rRNA. The polypeptide is Large ribosomal subunit protein bL31 (Acidithiobacillus ferrooxidans (strain ATCC 23270 / DSM 14882 / CIP 104768 / NCIMB 8455) (Ferrobacillus ferrooxidans (strain ATCC 23270))).